The primary structure comprises 787 residues: PAN2-PAN3 deadenylation complex subunit pan3 (787 aa).

The segment at 1–20 is disordered; sequence MNSGLTPSPSPAVAAAGPAG. A compositionally biased stretch (low complexity) spans 11–20; sequence PAVAAAGPAG. Residues 23–51 form a C3H1-type zinc finger; sequence GSKLKFCRYYAKDRTCFYGDECQFLHDDQ. 3 disordered regions span residues 131–162, 179–210, and 226–291; these read EATY…AAHD, TMSQ…MSQS, and GGPT…PPST. Low complexity-rich tracts occupy residues 143–154 and 200–210; these read NSSSSPSLLNDS and STSRLSNMSQS. A PABPC-interacting motif-2 (PAM-2) motif is present at residues 185–200; sequence KTPNPTASEFIPKGGS. The span at 265–290 shows a compositional bias: polar residues; the sequence is TPNPANYMVPTSASTPVTNSVSQPPS. Positions 365 to 650 are pseudokinase domain; sequence QIDQADMPGV…SVNDIMPMIG (286 aa). ATP-binding positions include Arg-422, 471–478, and 545–546; these read DFHAGSET and TK. Positions 651–689 form a coiled coil; sequence ARFYTQLDAAQMRNDVIEEDLAKEVQNGRLFRLLAKLGT. Positions 690–787 are knob domain; that stretch reads INERPEFQKD…ELVAAANGQL (98 aa).

It belongs to the protein kinase superfamily. PAN3 family. Homodimer. Forms a heterotrimer with a catalytic subunit pan2 to form the poly(A)-nuclease (PAN) deadenylation complex. Interacts (via PAM-2 motif) with poly(A)-binding protein pabpc1 (via PABC domain), conferring substrate specificity of the enzyme complex. Interacts with the GW182 family proteins tnrc6a, tnrc6b and tnrc6c.

It is found in the cytoplasm. The protein localises to the P-body. Functionally, regulatory subunit of the poly(A)-nuclease (PAN) deadenylation complex, one of two cytoplasmic mRNA deadenylases involved in general and miRNA-mediated mRNA turnover. PAN specifically shortens poly(A) tails of RNA and the activity is stimulated by poly(A)-binding protein (PABP). PAN deadenylation is followed by rapid degradation of the shortened mRNA tails by the CCR4-NOT complex. Deadenylated mRNAs are then degraded by two alternative mechanisms, namely exosome-mediated 3'-5' exonucleolytic degradation, or deadenylation-dependent mRNA decaping and subsequent 5'-3' exonucleolytic degradation by XRN1. PAN3 acts as a positive regulator for PAN activity, recruiting the catalytic subunit PAN2 to mRNA via its interaction with RNA and PABP, and to miRNA targets via its interaction with GW182 family proteins. The polypeptide is PAN2-PAN3 deadenylation complex subunit pan3 (Xenopus tropicalis (Western clawed frog)).